Here is a 422-residue protein sequence, read N- to C-terminus: Putative serpin-Z8 (422 aa).

An RCL region spans residues G369–V393.

It belongs to the serpin family.

Functionally, probable serine protease inhibitor. This is Putative serpin-Z8 from Oryza sativa subsp. japonica (Rice).